A 246-amino-acid polypeptide reads, in one-letter code: Eukaryotic translation initiation factor 6 (246 aa).

Ser-174 and Ser-175 each carry phosphoserine; by CK1.

This sequence belongs to the eIF-6 family. As to quaternary structure, monomer. Associates with the 60S ribosomal subunit. Post-translationally, phosphorylation at Ser-174 and Ser-175 promotes nuclear export.

It is found in the cytoplasm. The protein resides in the nucleus. Its subcellular location is the nucleolus. Functionally, binds to the 60S ribosomal subunit and prevents its association with the 40S ribosomal subunit to form the 80S initiation complex in the cytoplasm. Is also involved in ribosome biogenesis. Associates with pre-60S subunits in the nucleus and is involved in its nuclear export. This chain is Eukaryotic translation initiation factor 6, found in Sordaria macrospora (strain ATCC MYA-333 / DSM 997 / K(L3346) / K-hell).